The primary structure comprises 155 residues: Transcription antitermination protein NusB (155 aa).

Belongs to the NusB family.

Involved in transcription antitermination. Required for transcription of ribosomal RNA (rRNA) genes. Binds specifically to the boxA antiterminator sequence of the ribosomal RNA (rrn) operons. The protein is Transcription antitermination protein NusB of Ralstonia nicotianae (strain ATCC BAA-1114 / GMI1000) (Ralstonia solanacearum).